A 240-amino-acid polypeptide reads, in one-letter code: 6-phosphogluconolactonase (240 aa).

This sequence belongs to the glucosamine/galactosamine-6-phosphate isomerase family. 6-phosphogluconolactonase subfamily.

The enzyme catalyses 6-phospho-D-glucono-1,5-lactone + H2O = 6-phospho-D-gluconate + H(+). It participates in carbohydrate degradation; pentose phosphate pathway; D-ribulose 5-phosphate from D-glucose 6-phosphate (oxidative stage): step 2/3. Functionally, hydrolysis of 6-phosphogluconolactone to 6-phosphogluconate. The polypeptide is 6-phosphogluconolactonase (pgl) (Synechocystis sp. (strain ATCC 27184 / PCC 6803 / Kazusa)).